Here is a 102-residue protein sequence, read N- to C-terminus: Putative pterin-4-alpha-carbinolamine dehydratase (102 aa).

Belongs to the pterin-4-alpha-carbinolamine dehydratase family.

The enzyme catalyses (4aS,6R)-4a-hydroxy-L-erythro-5,6,7,8-tetrahydrobiopterin = (6R)-L-erythro-6,7-dihydrobiopterin + H2O. This chain is Putative pterin-4-alpha-carbinolamine dehydratase, found in Burkholderia multivorans (strain ATCC 17616 / 249).